The chain runs to 159 residues: MSRRHAAEKRVILPDMKYNSILLSRFINNIMKEGKKALAEKIVYSAFNKIEKKHRVDPYQTFNNAMHNVKPHLEVTSVRVGGANYQVPTHVDERRGYTLASRWIINAASKRSEKMMIDKLAEELFEASNNRGVAIKKKEDTHKMAEANKAFSHFSPKKM.

The protein belongs to the universal ribosomal protein uS7 family. In terms of assembly, part of the 30S ribosomal subunit. Contacts proteins S9 and S11.

One of the primary rRNA binding proteins, it binds directly to 16S rRNA where it nucleates assembly of the head domain of the 30S subunit. Is located at the subunit interface close to the decoding center, probably blocks exit of the E-site tRNA. The protein is Small ribosomal subunit protein uS7 of Rickettsia felis (strain ATCC VR-1525 / URRWXCal2) (Rickettsia azadi).